Consider the following 544-residue polypeptide: Membrane protein insertase YidC (544 aa).

6 helical membrane-spanning segments follow: residues 13–33, 321–341, 343–363, 409–429, 461–481, and 506–526; these read LSLF…SWML, LWYL…DVIP, WGLS…PLTF, LGGC…YSLV, LYFV…FTQL, and MPIM…IYWI.

Belongs to the OXA1/ALB3/YidC family. Type 1 subfamily. In terms of assembly, interacts with the Sec translocase complex via SecD. Specifically interacts with transmembrane segments of nascent integral membrane proteins during membrane integration.

The protein localises to the cell inner membrane. In terms of biological role, required for the insertion and/or proper folding and/or complex formation of integral membrane proteins into the membrane. Involved in integration of membrane proteins that insert both dependently and independently of the Sec translocase complex, as well as at least some lipoproteins. Aids folding of multispanning membrane proteins. The sequence is that of Membrane protein insertase YidC from Borreliella afzelii (strain PKo) (Borrelia afzelii).